Reading from the N-terminus, the 178-residue chain is ATP-dependent protease subunit HslV (178 aa).

T7 is a catalytic residue. 3 residues coordinate Na(+): G162, C165, and T168.

It belongs to the peptidase T1B family. HslV subfamily. As to quaternary structure, a double ring-shaped homohexamer of HslV is capped on each side by a ring-shaped HslU homohexamer. The assembly of the HslU/HslV complex is dependent on binding of ATP.

The protein localises to the cytoplasm. The catalysed reaction is ATP-dependent cleavage of peptide bonds with broad specificity.. With respect to regulation, allosterically activated by HslU binding. Its function is as follows. Protease subunit of a proteasome-like degradation complex believed to be a general protein degrading machinery. This Burkholderia mallei (strain ATCC 23344) protein is ATP-dependent protease subunit HslV.